A 294-amino-acid polypeptide reads, in one-letter code: Tetraspanin-15 (294 aa).

Residues Met-1–Ser-23 lie on the Cytoplasmic side of the membrane. Residues Leu-24 to Tyr-44 traverse the membrane as a helical segment. Residues Ala-45–Pro-62 lie on the Extracellular side of the membrane. Residues Ala-63–Ala-83 traverse the membrane as a helical segment. At Ser-84 to Gln-93 the chain is on the cytoplasmic side. Residues Ala-94–Leu-114 traverse the membrane as a helical segment. The Extracellular segment spans residues Ile-115–Ala-235. An N-linked (GlcNAc...) asparagine glycan is attached at Asn-118. 4 disulfide bridges follow: Cys-154/Cys-219, Cys-155/Cys-185, Cys-171/Cys-179, and Cys-186/Cys-198. N-linked (GlcNAc...) asparagine glycosylation is found at Asn-189 and Asn-230. The helical transmembrane segment at Gly-236 to Ile-256 threads the bilayer. The Cytoplasmic portion of the chain corresponds to Thr-257–Ile-294.

This sequence belongs to the tetraspanin (TM4SF) family. Interacts with ADAM10; the interaction influences ADAM10 substrate specificity, endocytosis and turnover. Palmitoylated.

It localises to the cell membrane. The protein localises to the late endosome membrane. Its function is as follows. Part of TspanC8 subgroup, composed of 6 members that interact with the transmembrane metalloprotease ADAM10. This interaction is required for ADAM10 exit from the endoplasmic reticulum and for enzymatic maturation and trafficking to the cell surface as well as substrate specificity. Different TspanC8/ADAM10 complexes have distinct substrates. Promotes ADAM10-mediated cleavage of CDH2. Negatively regulates ligand-induced Notch activity probably by regulating ADAM10 activity. The chain is Tetraspanin-15 (TSPAN15) from Bos taurus (Bovine).